The chain runs to 559 residues: ADP,ATP carrier protein 1 (559 aa).

Positions Met1–Ser10 are enriched in polar residues. The disordered stretch occupies residues Met1–Ile22. A glycan (N-linked (GlcNAc...) asparagine) is linked at Asn8. The next 4 membrane-spanning stretches (helical) occupy residues Phe46–Leu66, Thr79–Ile99, Ile111–Leu131, and Ile174–Phe194. Asn196 is a glycosylation site (N-linked (GlcNAc...) asparagine). 2 consecutive transmembrane segments (helical) span residues Pro210–Phe230 and Gln242–Leu262. Asn290 carries N-linked (GlcNAc...) asparagine glycosylation. A run of 3 helical transmembrane segments spans residues Leu305–Ser325, Gln354–Val373, and Gly377–Leu397. Asn403 carries an N-linked (GlcNAc...) asparagine glycan. 3 consecutive transmembrane segments (helical) span residues Tyr425–Phe447, Ile473–Leu493, and Pro503–Leu523.

This sequence belongs to the ADP/ATP translocase tlc family.

The protein localises to the cell membrane. Functionally, ATP transporter involved in the uptake of ATP from the host cell cytoplasm. Provides the microsporidian cell with host ATP in exchange for ADP. This is an obligate exchange system. This energy acquiring activity is an important component of microsporidian parasitism. The protein is ADP,ATP carrier protein 1 (NTT1) of Encephalitozoon cuniculi (strain GB-M1) (Microsporidian parasite).